A 231-amino-acid chain; its full sequence is Fibronectin type III domain-containing protein 4 (231 aa).

The signal sequence occupies residues Met-1–Ala-40. Residues Asp-41–Thr-163 are Extracellular-facing. The Fibronectin type-III domain maps to Pro-43–Gly-136. N-linked (GlcNAc...) asparagine glycosylation is found at Asn-48 and Asn-143. The tract at residues Gly-118–Asp-156 is disordered. A helical transmembrane segment spans residues Gly-164–Cys-184. Residues Arg-185 to Val-231 are Cytoplasmic-facing. Residues Asn-193–Gly-205 show a composition bias toward basic and acidic residues. The disordered stretch occupies residues Asn-193–Val-231.

As to expression, predominantly expressed in the liver and in the brain, including in the cortex, hypothalamus and hippocampus. Also expressed in heart, lung, kidney and testis. In the colon, expressed in the epithelium and in a subset of immune cells in lymphoid aggregates.

Its subcellular location is the membrane. It localises to the secreted. Has anti-inflammatory properties. In the colon, acts on macrophages to down-regulate inflammation. May suppress osteoclastogenesis and mature osteoclast resorptive function. In white adipose tissue, decreases local inflammation, via interaction with GPR116. Also required for proper systemic glucose tolerance, specifically sensitizing white adipocytes to insulin and promoting glucose uptake. The insulin sensitizing function in adipose tissue is mediated by interaction with ADGRF5/GPR116 and activation of cAMP signaling. The chain is Fibronectin type III domain-containing protein 4 (Fndc4) from Mus musculus (Mouse).